A 296-amino-acid chain; its full sequence is Thymidylate synthase (296 aa).

Residues arginine 24 and 151 to 152 (RR) each bind dUMP. Cysteine 171 functions as the Nucleophile in the catalytic mechanism. DUMP is bound by residues 197 to 200 (RSAD), asparagine 208, and 238 to 240 (HVY). Aspartate 200 is a (6R)-5,10-methylene-5,6,7,8-tetrahydrofolate binding site.

It belongs to the thymidylate synthase family. Homodimer.

It catalyses the reaction dUMP + (6R)-5,10-methylene-5,6,7,8-tetrahydrofolate = 7,8-dihydrofolate + dTMP. It functions in the pathway pyrimidine metabolism; dTTP biosynthesis. This is Thymidylate synthase (tms1) from Agaricus bisporus (White button mushroom).